Here is a 415-residue protein sequence, read N- to C-terminus: Tyrosine--tRNA ligase (415 aa).

Tyr-33 serves as a coordination point for L-tyrosine. The 'HIGH' region signature appears at 38–47 (PSGESLHLGN). L-tyrosine is bound by residues Tyr-161 and Gln-165. Residues 225-229 (KFGKS) carry the 'KMSKS' region motif. Lys-228 contributes to the ATP binding site. Positions 350 to 414 (MVIDFLLQAK…KKNYFIVVWK (65 aa)) constitute an S4 RNA-binding domain.

The protein belongs to the class-I aminoacyl-tRNA synthetase family. TyrS type 1 subfamily. As to quaternary structure, homodimer.

Its subcellular location is the cytoplasm. It catalyses the reaction tRNA(Tyr) + L-tyrosine + ATP = L-tyrosyl-tRNA(Tyr) + AMP + diphosphate + H(+). Its function is as follows. Catalyzes the attachment of tyrosine to tRNA(Tyr) in a two-step reaction: tyrosine is first activated by ATP to form Tyr-AMP and then transferred to the acceptor end of tRNA(Tyr). The chain is Tyrosine--tRNA ligase from Mycoplasmoides gallisepticum (strain R(low / passage 15 / clone 2)) (Mycoplasma gallisepticum).